The primary structure comprises 189 residues: Ion-translocating oxidoreductase complex subunit B (189 aa).

A hydrophobic region spans residues 1 to 26 (MSAIVIAIVVLTILALVFGVLLGFAA). Residues 32–90 (EGNPLTDQIEALLPQTQCGQCGYPGCRPYAEAIANGDKVNKCPPGGAATMEKLADLMGV) form the 4Fe-4S domain. Cysteine 49, cysteine 52, cysteine 57, cysteine 73, cysteine 114, cysteine 117, cysteine 120, cysteine 124, cysteine 144, cysteine 147, cysteine 150, and cysteine 154 together coordinate [4Fe-4S] cluster. 4Fe-4S ferredoxin-type domains follow at residues 105 to 134 (KVAY…GSGK) and 135 to 164 (LMHT…MLPV).

It belongs to the 4Fe4S bacterial-type ferredoxin family. RnfB subfamily. In terms of assembly, the complex is composed of six subunits: RnfA, RnfB, RnfC, RnfD, RnfE and RnfG. [4Fe-4S] cluster is required as a cofactor.

The protein resides in the cell inner membrane. In terms of biological role, part of a membrane-bound complex that couples electron transfer with translocation of ions across the membrane. The polypeptide is Ion-translocating oxidoreductase complex subunit B (Shewanella pealeana (strain ATCC 700345 / ANG-SQ1)).